The chain runs to 131 residues: MSWQTYVDEHLMCEIEGHHLTSAAIVGHDGTVWAQSAAFPQFKPEEMTNIMKDFDEPGFLAPTGLFLGPTKYMVIQGEPGAVIRGKKGSGGITVKKTGQALVVGIYDEPMTPGQCNMVVERLGDYLVEQGL.

It belongs to the profilin family. In terms of assembly, occurs in many kinds of cells as a complex with monomeric actin in a 1:1 ratio.

It localises to the cytoplasm. Its subcellular location is the cytoskeleton. Its function is as follows. Binds to actin and affects the structure of the cytoskeleton. At high concentrations, profilin prevents the polymerization of actin, whereas it enhances it at low concentrations. By binding to PIP2, it inhibits the formation of IP3 and DG. May serve as a modulator in pollen germination and pollen tube growth. This is Profilin-A from Oryza sativa subsp. japonica (Rice).